The sequence spans 809 residues: Cyclic nucleotide-gated channel beta-3 (809 aa).

Disordered regions lie at residues 1–121 (MFKS…PPAA) and 153–178 (GDLS…ESDD). Residues 1–218 (MFKSLTKVNK…SIDSYTDRLY (218 aa)) lie on the Cytoplasmic side of the membrane. Residues 22–31 (QSSRRNEEGS) are compositionally biased toward basic and acidic residues. The span at 32-43 (HPSNQSQQTTAQ) shows a compositional bias: polar residues. The span at 44 to 53 (EENKGEEKSL) shows a compositional bias: basic and acidic residues. The segment covering 55–88 (TKSTPVTSEEPHTNIQDKLSKKNSSGDLTTNPDP) has biased composition (polar residues). The helical transmembrane segment at 219–242 (LLWLLLVTLAYNWNCCFIPLRLVF) threads the bilayer. Over 243 to 249 (PYQTADN) the chain is Extracellular. A helical transmembrane segment spans residues 250-270 (IHYWLIADIICDIIYLYDMLF). At 271–299 (IQPRLQFVRGGDIIVDSNELRKHYRTSTK) the chain is on the cytoplasmic side. A helical membrane pass occupies residues 300-317 (FQLDVASIIPFDICYLFF). Over 318-320 (GFN) the chain is Extracellular. A helical membrane pass occupies residues 321–335 (PMFRANRMLKYTSFF). Residues 336–348 (EFNHHLESIMDKA) lie on the Cytoplasmic side of the membrane. Residues 348–447 (AYIYRVIRTT…IGQMRDVIGA (100 aa)) are ion conduction pathway. Residues 349–371 (YIYRVIRTTGYLLFILHINACVY) traverse the membrane as a helical segment. Residues 372-393 (YWASNYEGIGTTRWVYDGEGNE) lie on the Extracellular side of the membrane. 2 consecutive transmembrane segments (helical) span residues 394–420 (YLRC…LFEI) and 421–445 (VFQL…RDVI). Residues 407 to 410 (TIGG) are selectivity filter. Topologically, residues 446 to 809 (GAATANQNYF…TIEVKEKAKQ (364 aa)) are cytoplasmic. The tract at residues 450–526 (ANQNYFRACM…SIISKVDLFK (77 aa)) is C-linker. Residues 530–646 (TQMIYDMLLR…ILMKKARVLL (117 aa)) form a cyclic nucleotide-binding domain region. 3',5'-cyclic GMP contacts are provided by Gly-591, Glu-592, Arg-604, and Thr-605. The tract at residues 698 to 776 (QAAQKKENSE…PHSVRRTVLP (79 aa)) is disordered. The span at 716 to 755 (NEDKQKENEDKQKENEDKGKENEDKDKGREPEEKPLDRPE) shows a compositional bias: basic and acidic residues.

This sequence belongs to the cyclic nucleotide-gated cation channel (TC 1.A.1.5) family. CNGB3 subfamily. As to quaternary structure, forms heterotetrameric channels composed of CNGA3 and CNGB3 subunits with 3:1 stoichiometry. As to expression, expressed specifically in the retina.

The protein resides in the cell membrane. The catalysed reaction is Ca(2+)(in) = Ca(2+)(out). The enzyme catalyses Na(+)(in) = Na(+)(out). It carries out the reaction K(+)(in) = K(+)(out). It catalyses the reaction NH4(+)(in) = NH4(+)(out). The catalysed reaction is Rb(+)(in) = Rb(+)(out). The enzyme catalyses Li(+)(in) = Li(+)(out). It carries out the reaction Cs(+)(in) = Cs(+)(out). Its function is as follows. Pore-forming subunit of the cone cyclic nucleotide-gated channel. Mediates cone photoresponses at bright light converting transient changes in intracellular cGMP levels into electrical signals. In the dark, cGMP levels are high and keep the channel open enabling a steady inward current carried by Na(+) and Ca(2+) ions that leads to membrane depolarization and neurotransmitter release from synaptic terminals. Upon photon absorption cGMP levels decline leading to channel closure and membrane hyperpolarization that ultimately slows neurotransmitter release and signals the presence of light, the end point of the phototransduction cascade. Conducts cGMP- and cAMP-gated ion currents, with permeability for monovalent and divalent cations. The sequence is that of Cyclic nucleotide-gated channel beta-3 from Homo sapiens (Human).